We begin with the raw amino-acid sequence, 228 residues long: uncharacterized protein (228 aa).

The first 16 residues, 1–16, serve as a signal peptide directing secretion; it reads MILLLLALISATTAFQ. The chain crosses the membrane as a helical span at residues 206-225; it reads LFQTLFFVTLSFLVGSAFAL.

To A.fulgidus AF_1225.

Its subcellular location is the membrane. This is an uncharacterized protein from Archaeoglobus fulgidus (strain ATCC 49558 / DSM 4304 / JCM 9628 / NBRC 100126 / VC-16).